The sequence spans 185 residues: Ribose 1,5-bisphosphate phosphokinase PhnN (185 aa).

Position 13–20 (13–20) interacts with ATP; sequence GPSGAGKD.

Belongs to the ribose 1,5-bisphosphokinase family.

It catalyses the reaction alpha-D-ribose 1,5-bisphosphate + ATP = 5-phospho-alpha-D-ribose 1-diphosphate + ADP. It functions in the pathway metabolic intermediate biosynthesis; 5-phospho-alpha-D-ribose 1-diphosphate biosynthesis; 5-phospho-alpha-D-ribose 1-diphosphate from D-ribose 5-phosphate (route II): step 3/3. In terms of biological role, catalyzes the phosphorylation of ribose 1,5-bisphosphate to 5-phospho-D-ribosyl alpha-1-diphosphate (PRPP). This is Ribose 1,5-bisphosphate phosphokinase PhnN from Chromobacterium violaceum (strain ATCC 12472 / DSM 30191 / JCM 1249 / CCUG 213 / NBRC 12614 / NCIMB 9131 / NCTC 9757 / MK).